Consider the following 327-residue polypeptide: tRNA uridine(34) hydroxylase (327 aa).

Residues 123–217 (SDPEVLLVDT…YLEEVKQEES (95 aa)) enclose the Rhodanese domain. The Cysteine persulfide intermediate role is filled by Cys-177.

This sequence belongs to the TrhO family.

The enzyme catalyses uridine(34) in tRNA + AH2 + O2 = 5-hydroxyuridine(34) in tRNA + A + H2O. In terms of biological role, catalyzes oxygen-dependent 5-hydroxyuridine (ho5U) modification at position 34 in tRNAs. In Shewanella piezotolerans (strain WP3 / JCM 13877), this protein is tRNA uridine(34) hydroxylase.